We begin with the raw amino-acid sequence, 591 residues long: Probable acetolactate synthase large subunit (591 aa).

A thiamine diphosphate-binding site is contributed by glutamate 47. Residues arginine 149, 258–279 (HGTKAANYAVTECDVLIAIGCR), and 301–320 (DIDPAEIGKNVRADIPIVGD) contribute to the FAD site. The tract at residues 396-476 (QNQMWMAHFF…VVICIFDNRT (81 aa)) is thiamine pyrophosphate binding. Residues aspartate 447 and asparagine 474 each contribute to the Mg(2+) site.

The protein belongs to the TPP enzyme family. As to quaternary structure, dimer of large and small chains. The cofactor is Mg(2+). Requires thiamine diphosphate as cofactor.

It carries out the reaction 2 pyruvate + H(+) = (2S)-2-acetolactate + CO2. The protein operates within amino-acid biosynthesis; L-isoleucine biosynthesis; L-isoleucine from 2-oxobutanoate: step 1/4. It participates in amino-acid biosynthesis; L-valine biosynthesis; L-valine from pyruvate: step 1/4. This chain is Probable acetolactate synthase large subunit (ilvB), found in Methanocaldococcus jannaschii (strain ATCC 43067 / DSM 2661 / JAL-1 / JCM 10045 / NBRC 100440) (Methanococcus jannaschii).